Reading from the N-terminus, the 288-residue chain is Sulfur carrier protein FdhD (288 aa).

The active-site Cysteine persulfide intermediate is the cysteine 122. 268–273 contacts Mo-bis(molybdopterin guanine dinucleotide); it reads FVRGER.

This sequence belongs to the FdhD family.

It is found in the cytoplasm. Its function is as follows. Required for formate dehydrogenase (FDH) activity. Acts as a sulfur carrier protein that transfers sulfur from IscS to the molybdenum cofactor prior to its insertion into FDH. In Anaeromyxobacter dehalogenans (strain 2CP-1 / ATCC BAA-258), this protein is Sulfur carrier protein FdhD.